Reading from the N-terminus, the 306-residue chain is Curved DNA-binding protein (306 aa).

Positions 5 to 69 (DYYAIMGVKP…QRRAEYDQMW (65 aa)) constitute a J domain.

The protein localises to the cytoplasm. It localises to the nucleoid. Its function is as follows. DNA-binding protein that preferentially recognizes a curved DNA sequence. It is probably a functional analog of DnaJ; displays overlapping activities with DnaJ, but functions under different conditions, probably acting as a molecular chaperone in an adaptive response to environmental stresses other than heat shock. Lacks autonomous chaperone activity; binds native substrates and targets them for recognition by DnaK. Its activity is inhibited by the binding of CbpM. The polypeptide is Curved DNA-binding protein (Escherichia coli O127:H6 (strain E2348/69 / EPEC)).